Reading from the N-terminus, the 428-residue chain is Glutamate-1-semialdehyde 2,1-aminomutase (428 aa).

N6-(pyridoxal phosphate)lysine is present on Lys267.

This sequence belongs to the class-III pyridoxal-phosphate-dependent aminotransferase family. HemL subfamily. In terms of assembly, homodimer. Pyridoxal 5'-phosphate serves as cofactor.

It is found in the cytoplasm. It catalyses the reaction (S)-4-amino-5-oxopentanoate = 5-aminolevulinate. It participates in porphyrin-containing compound metabolism; protoporphyrin-IX biosynthesis; 5-aminolevulinate from L-glutamyl-tRNA(Glu): step 2/2. The protein operates within porphyrin-containing compound metabolism; chlorophyll biosynthesis. The protein is Glutamate-1-semialdehyde 2,1-aminomutase of Prochlorococcus marinus (strain MIT 9313).